The primary structure comprises 327 residues: Probable cell division protein WhiA (327 aa).

Residues 275-308 (SLEELGRLADPPMTKDAVAGRIRRLLSMADRKAK) constitute a DNA-binding region (H-T-H motif).

It belongs to the WhiA family.

Its function is as follows. Involved in cell division and chromosome segregation. This chain is Probable cell division protein WhiA, found in Mycobacterium leprae (strain Br4923).